The sequence spans 521 residues: Exodeoxyribonuclease 7 large subunit (521 aa).

The interval 494–521 (ATSGAARPKPAAKPSTKAKEPGNQGSLF) is disordered. A compositionally biased stretch (low complexity) spans 498–508 (AARPKPAAKPS).

It belongs to the XseA family. Heterooligomer composed of large and small subunits.

It localises to the cytoplasm. The enzyme catalyses Exonucleolytic cleavage in either 5'- to 3'- or 3'- to 5'-direction to yield nucleoside 5'-phosphates.. Functionally, bidirectionally degrades single-stranded DNA into large acid-insoluble oligonucleotides, which are then degraded further into small acid-soluble oligonucleotides. The polypeptide is Exodeoxyribonuclease 7 large subunit (Mesorhizobium japonicum (strain LMG 29417 / CECT 9101 / MAFF 303099) (Mesorhizobium loti (strain MAFF 303099))).